The primary structure comprises 156 residues: Cyanate hydratase (156 aa).

Residues arginine 96, glutamate 99, and serine 122 contribute to the active site.

Belongs to the cyanase family.

The catalysed reaction is cyanate + hydrogencarbonate + 3 H(+) = NH4(+) + 2 CO2. Catalyzes the reaction of cyanate with bicarbonate to produce ammonia and carbon dioxide. The protein is Cyanate hydratase of Pseudomonas fluorescens (strain ATCC BAA-477 / NRRL B-23932 / Pf-5).